The chain runs to 540 residues: Bifunctional purine biosynthesis protein PurH (540 aa).

One can recognise an MGS-like domain in the interval 1–144 (MKRALISVYD…KNYQDVGVVV (144 aa)). The interval 204–224 (ETAPERPIGADPGPQKPAAPS) is disordered.

Belongs to the PurH family.

The enzyme catalyses (6R)-10-formyltetrahydrofolate + 5-amino-1-(5-phospho-beta-D-ribosyl)imidazole-4-carboxamide = 5-formamido-1-(5-phospho-D-ribosyl)imidazole-4-carboxamide + (6S)-5,6,7,8-tetrahydrofolate. It carries out the reaction IMP + H2O = 5-formamido-1-(5-phospho-D-ribosyl)imidazole-4-carboxamide. It participates in purine metabolism; IMP biosynthesis via de novo pathway; 5-formamido-1-(5-phospho-D-ribosyl)imidazole-4-carboxamide from 5-amino-1-(5-phospho-D-ribosyl)imidazole-4-carboxamide (10-formyl THF route): step 1/1. The protein operates within purine metabolism; IMP biosynthesis via de novo pathway; IMP from 5-formamido-1-(5-phospho-D-ribosyl)imidazole-4-carboxamide: step 1/1. The sequence is that of Bifunctional purine biosynthesis protein PurH from Symbiobacterium thermophilum (strain DSM 24528 / JCM 14929 / IAM 14863 / T).